Consider the following 143-residue polypeptide: Nucleoside diphosphate kinase (143 aa).

Lys-11, Phe-59, Arg-87, Thr-93, Arg-104, and Asn-114 together coordinate ATP. The Pros-phosphohistidine intermediate role is filled by His-117.

The protein belongs to the NDK family. Homotetramer. Requires Mg(2+) as cofactor.

It localises to the cytoplasm. The enzyme catalyses a 2'-deoxyribonucleoside 5'-diphosphate + ATP = a 2'-deoxyribonucleoside 5'-triphosphate + ADP. It catalyses the reaction a ribonucleoside 5'-diphosphate + ATP = a ribonucleoside 5'-triphosphate + ADP. Major role in the synthesis of nucleoside triphosphates other than ATP. The ATP gamma phosphate is transferred to the NDP beta phosphate via a ping-pong mechanism, using a phosphorylated active-site intermediate. This chain is Nucleoside diphosphate kinase, found in Clostridium perfringens (strain ATCC 13124 / DSM 756 / JCM 1290 / NCIMB 6125 / NCTC 8237 / Type A).